The chain runs to 563 residues: MDVGELLSYQPNRGTKRPRDDEEEELKTRRKQTGPRERGRYREDEATAAEDADDDKKRLLQIIDRDGEEEEEEEEPLDESSVKKMILTFEKRSYKNQELRIKFPDNPEKFMESELDLNDIIQEMHVVATMPDLYHLLVELSAVQSLLGLLGHDNTDVSIAVVDLLQELTDIDTLHESEEGAEVLIDALVDGQVVALLVQNLERLDESVREEADGVHNTLAIVENMAEFRPEMCTEAAQQGLLQWLLKRLKAKMPFDANKLYCSEVLAILLQDNDENRELLGELDGIDVLLQQLSVFKRHNPSTAEEQEMMENLFDALCSCLMLSSNRERFLKGEGLQLMNLMLREKKISRSSALKVLDHAMIGPEGADNCHKFVDILGLRTIFPLFMKSPRKIKKVGTTEKEHEEHVCSILASLLRNLRGQQRTRLLNKFTENDSEKVDRLMELHFKYLGAMQVADKKIEGEKHDIVRRGEIIDNDMEDEFYLRRLDAGLFILQHICYIMAEICNANVPQIRQRVHQILNMRGSSIKIVRHIIKEYAENIGDGRSPEFRETEQKRILGLLENF.

M1 bears the N-acetylmethionine mark. The interval 1 to 81 (MDVGELLSYQ…EEEEPLDESS (81 aa)) is disordered. A Nuclear localization signal motif is present at residues 16-33 (KRPRDDEEEELKTRRKQT). Over residues 34 to 45 (GPRERGRYREDE) the composition is skewed to basic and acidic residues. Positions 66 to 78 (DGEEEEEEEEPLD) are enriched in acidic residues. HEAT repeat units lie at residues 79–129 (ESSV…VVAT) and 134–176 (YHLL…TLHE). K91 bears the N6-acetyllysine mark. Positions 130-140 (MPDLYHLLVEL) match the Nuclear export signal (NES) motif. 5 ARM repeats span residues 178–228 (EEGA…MAEF), 229–273 (RPEM…LQDN), 274–323 (DENR…CLML), 325–363 (SNRE…AMIG), and 364–417 (PEGA…LLRN). At S389 the chain carries Phosphoserine. The stretch at 476–540 (DMEDEFYLRR…HIIKEYAENI (65 aa)) forms a coiled coil. At S545 the chain carries Phosphoserine.

Component of the PRP19-CDC5L splicing complex composed of a core complex comprising a homotetramer of PRPF19, CDC5L, PLRG1 and BCAS2, and at least three less stably associated proteins CTNNBL1, CWC15 and HSPA8. Interacts directly with CWC15 and CDC5L in the complex. Interacts with AICDA; the interaction is important for the antibody diversification activity of AICDA. Interacts with PRPF31 (via its NLS). Interacts (via its N-terminal NLS) with KPNA1 and KPNA2.

The protein localises to the nucleus. Functionally, component of the PRP19-CDC5L complex that forms an integral part of the spliceosome and is required for activating pre-mRNA splicing. Participates in AID/AICDA-mediated somatic hypermutation (SHM) and class-switch recombination (CSR), 2 processes resulting in the production of high-affinity, mutated isotype-switched antibodies. The chain is Beta-catenin-like protein 1 (Ctnnbl1) from Rattus norvegicus (Rat).